Consider the following 477-residue polypeptide: UDP-N-acetylmuramate--L-alanine ligase (477 aa).

Position 112–118 (112–118 (GTHGKTT)) interacts with ATP.

It belongs to the MurCDEF family.

The protein localises to the cytoplasm. It carries out the reaction UDP-N-acetyl-alpha-D-muramate + L-alanine + ATP = UDP-N-acetyl-alpha-D-muramoyl-L-alanine + ADP + phosphate + H(+). It participates in cell wall biogenesis; peptidoglycan biosynthesis. In terms of biological role, cell wall formation. The sequence is that of UDP-N-acetylmuramate--L-alanine ligase from Verminephrobacter eiseniae (strain EF01-2).